The sequence spans 164 residues: Thiol peroxidase (164 aa).

The 146-residue stretch at 18 to 163 (INEGDFAPDF…FDAALAAYKN (146 aa)) folds into the Thioredoxin domain. Cysteine 60 serves as the catalytic Cysteine sulfenic acid (-SOH) intermediate. A disulfide bond links cysteine 60 and cysteine 93.

This sequence belongs to the peroxiredoxin family. Tpx subfamily. As to quaternary structure, homodimer.

The enzyme catalyses a hydroperoxide + [thioredoxin]-dithiol = an alcohol + [thioredoxin]-disulfide + H2O. In terms of biological role, thiol-specific peroxidase that catalyzes the reduction of hydrogen peroxide and organic hydroperoxides to water and alcohols, respectively. Plays a role in cell protection against oxidative stress by detoxifying peroxides. The sequence is that of Thiol peroxidase from Staphylococcus aureus (strain MRSA252).